The chain runs to 101 residues: MARPLEEALDVIVSTFHKYSGNEGDKFKLNKTELKELLTRELPSFLGRRTDEAAFQKLMNNLDSNRDNEVDFQEYCVFLSCIAMMCNEFFEGCPDKEPRKK.

Position 2 is an N-acetylalanine (Ala-2). 2 consecutive EF-hand domains span residues 12-47 (IVST…SFLG) and 50-85 (TDEA…IAMM). The Ca(2+) site is built by Lys-28 and Glu-33. Lys-35 bears the N6-acetyllysine mark. Asp-63, Asn-65, Asp-67, Glu-69, and Glu-74 together coordinate Ca(2+).

The protein belongs to the S-100 family. In terms of assembly, homodimer. Interacts with PPFIBP1 in a calcium-dependent mode. Interacts with PGLYRP1; this complex acts as a chemoattractant that promotes lymphocyte movement. Interacts with MYH9; this interaction increases cell motility. Interacts with Annexin 2/ANXA2. Interacts with TP53; this interaction promotes TP53 degradation. Interacts with CCR5 and CXCR3. Interacts with FCGR3A; this interaction inhibits PKC-dependent phosphorylation of FCGR3A.

It is found in the secreted. Its subcellular location is the nucleus. It localises to the cytoplasm. Its function is as follows. Calcium-binding protein that plays a role in various cellular processes including motility, angiogenesis, cell differentiation, apoptosis, and autophagy. Increases cell motility and invasiveness by interacting with non-muscle myosin heavy chain (NMMHC) IIA/MYH9. Mechanistically, promotes filament depolymerization and increases the amount of soluble myosin-IIA, resulting in the formation of stable protrusions facilitating chemotaxis. Also modulates the pro-apoptotic function of TP53 by binding to its C-terminal transactivation domain within the nucleus and reducing its protein levels. Within the extracellular space, stimulates cytokine production including granulocyte colony-stimulating factor and CCL24 from T-lymphocytes. In addition, stimulates T-lymphocyte chemotaxis by acting as a chemoattractant complex with PGLYRP1 that promotes lymphocyte migration via CCR5 and CXCR3 receptors. This Rattus norvegicus (Rat) protein is Protein S100-A4 (S100a4).